Consider the following 93-residue polypeptide: MVSPRVRLAALALSVCAILCLGMHASAFPPKPDNPGDNASPEQMARYKAAVRHYINLITRQRYGKRALTPENWIYRDPAEERVTYGLDDYAMW.

The first 27 residues, 1–27, serve as a signal peptide directing secretion; the sequence is MVSPRVRLAALALSVCAILCLGMHASA. Tyr63 carries the tyrosine amide modification. Positions 65–93 are cleaved as a propeptide — C-terminal extension; that stretch reads KRALTPENWIYRDPAEERVTYGLDDYAMW.

The protein belongs to the NPY family. As to expression, gut and medial reticulospinal neuron system in the brainstem.

The protein localises to the secreted. In terms of biological role, gastrointestinal hormone and neuropeptide. The polypeptide is Peptide YY-like (pyy) (Lampetra fluviatilis (European river lamprey)).